Reading from the N-terminus, the 349-residue chain is Twinfilin-2-B (349 aa).

2 consecutive ADF-H domains span residues 4–139 (QTGI…KHVS) and 177–313 (GLSF…DEVH). Residues 321–349 (QAFAKPKGPAGKRGQKRLIKGPGENGEDS) form a disordered region.

It belongs to the actin-binding proteins ADF family. Twinfilin subfamily. In terms of assembly, interacts with G-actin; ADP-actin form and capping protein (CP).

The protein localises to the cytoplasm. It is found in the cytoskeleton. Its subcellular location is the perinuclear region. Functionally, actin-binding protein involved in motile and morphological processes. Inhibits actin polymerization, likely by sequestering G-actin. In Xenopus laevis (African clawed frog), this protein is Twinfilin-2-B (twf2-b).